Here is a 403-residue protein sequence, read N- to C-terminus: Formate-dependent phosphoribosylglycinamide formyltransferase (403 aa).

Residues 27–28 and glutamate 87 contribute to the N(1)-(5-phospho-beta-D-ribosyl)glycinamide site; that span reads EL. ATP is bound by residues arginine 120, lysine 161, 166–171, 201–204, and glutamate 209; these read SSGKGQ and EGFV. Positions 125–319 constitute an ATP-grasp domain; it reads RLAAEELGLP…EFELHARAIL (195 aa). Positions 278 and 290 each coordinate Mg(2+). Residues aspartate 297, lysine 366, and 373–374 contribute to the N(1)-(5-phospho-beta-D-ribosyl)glycinamide site; that span reads RR. Residues 382 to 403 are disordered; it reads GPDVETARSRAREAASRVEPVA. The span at 386 to 397 shows a compositional bias: basic and acidic residues; the sequence is ETARSRAREAAS.

The protein belongs to the PurK/PurT family. As to quaternary structure, homodimer.

It catalyses the reaction N(1)-(5-phospho-beta-D-ribosyl)glycinamide + formate + ATP = N(2)-formyl-N(1)-(5-phospho-beta-D-ribosyl)glycinamide + ADP + phosphate + H(+). It functions in the pathway purine metabolism; IMP biosynthesis via de novo pathway; N(2)-formyl-N(1)-(5-phospho-D-ribosyl)glycinamide from N(1)-(5-phospho-D-ribosyl)glycinamide (formate route): step 1/1. Functionally, involved in the de novo purine biosynthesis. Catalyzes the transfer of formate to 5-phospho-ribosyl-glycinamide (GAR), producing 5-phospho-ribosyl-N-formylglycinamide (FGAR). Formate is provided by PurU via hydrolysis of 10-formyl-tetrahydrofolate. In Rhodococcus jostii (strain RHA1), this protein is Formate-dependent phosphoribosylglycinamide formyltransferase.